The sequence spans 441 residues: 3-phosphoshikimate 1-carboxyvinyltransferase (441 aa).

The 3-phosphoshikimate site is built by lysine 25, serine 26, and arginine 30. Lysine 25 is a binding site for phosphoenolpyruvate. The phosphoenolpyruvate site is built by glycine 97 and arginine 125. Positions 169, 170, 311, and 338 each coordinate 3-phosphoshikimate. Glutamine 170 provides a ligand contact to phosphoenolpyruvate. The active-site Proton acceptor is aspartate 311. 3 residues coordinate phosphoenolpyruvate: arginine 342, arginine 383, and lysine 410.

Belongs to the EPSP synthase family. Monomer.

The protein localises to the cytoplasm. It catalyses the reaction 3-phosphoshikimate + phosphoenolpyruvate = 5-O-(1-carboxyvinyl)-3-phosphoshikimate + phosphate. The protein operates within metabolic intermediate biosynthesis; chorismate biosynthesis; chorismate from D-erythrose 4-phosphate and phosphoenolpyruvate: step 6/7. Its function is as follows. Catalyzes the transfer of the enolpyruvyl moiety of phosphoenolpyruvate (PEP) to the 5-hydroxyl of shikimate-3-phosphate (S3P) to produce enolpyruvyl shikimate-3-phosphate and inorganic phosphate. This Chlamydia muridarum (strain MoPn / Nigg) protein is 3-phosphoshikimate 1-carboxyvinyltransferase.